Reading from the N-terminus, the 172-residue chain is Large ribosomal subunit protein uL10 (172 aa).

It belongs to the universal ribosomal protein uL10 family. As to quaternary structure, part of the ribosomal stalk of the 50S ribosomal subunit. The N-terminus interacts with L11 and the large rRNA to form the base of the stalk. The C-terminus forms an elongated spine to which L12 dimers bind in a sequential fashion forming a multimeric L10(L12)X complex.

Its function is as follows. Forms part of the ribosomal stalk, playing a central role in the interaction of the ribosome with GTP-bound translation factors. The sequence is that of Large ribosomal subunit protein uL10 from Brucella suis (strain ATCC 23445 / NCTC 10510).